A 226-amino-acid chain; its full sequence is Thiamine-phosphate synthase (226 aa).

4-amino-2-methyl-5-(diphosphooxymethyl)pyrimidine contacts are provided by residues 46–50 (QFRDK) and Asp-83. The Mg(2+) site is built by Asp-84 and Asp-103. Ser-122 lines the 4-amino-2-methyl-5-(diphosphooxymethyl)pyrimidine pocket. 149 to 151 (TQS) serves as a coordination point for 2-[(2R,5Z)-2-carboxy-4-methylthiazol-5(2H)-ylidene]ethyl phosphate. Lys-152 is a 4-amino-2-methyl-5-(diphosphooxymethyl)pyrimidine binding site. 2-[(2R,5Z)-2-carboxy-4-methylthiazol-5(2H)-ylidene]ethyl phosphate is bound by residues Gly-181 and 201-202 (IT).

Belongs to the thiamine-phosphate synthase family. Mg(2+) serves as cofactor.

It carries out the reaction 2-[(2R,5Z)-2-carboxy-4-methylthiazol-5(2H)-ylidene]ethyl phosphate + 4-amino-2-methyl-5-(diphosphooxymethyl)pyrimidine + 2 H(+) = thiamine phosphate + CO2 + diphosphate. It catalyses the reaction 2-(2-carboxy-4-methylthiazol-5-yl)ethyl phosphate + 4-amino-2-methyl-5-(diphosphooxymethyl)pyrimidine + 2 H(+) = thiamine phosphate + CO2 + diphosphate. The enzyme catalyses 4-methyl-5-(2-phosphooxyethyl)-thiazole + 4-amino-2-methyl-5-(diphosphooxymethyl)pyrimidine + H(+) = thiamine phosphate + diphosphate. Its pathway is cofactor biosynthesis; thiamine diphosphate biosynthesis; thiamine phosphate from 4-amino-2-methyl-5-diphosphomethylpyrimidine and 4-methyl-5-(2-phosphoethyl)-thiazole: step 1/1. Its function is as follows. Condenses 4-methyl-5-(beta-hydroxyethyl)thiazole monophosphate (THZ-P) and 2-methyl-4-amino-5-hydroxymethyl pyrimidine pyrophosphate (HMP-PP) to form thiamine monophosphate (TMP). This chain is Thiamine-phosphate synthase, found in Haemophilus influenzae (strain ATCC 51907 / DSM 11121 / KW20 / Rd).